Consider the following 410-residue polypeptide: Caspase-1 (410 aa).

The 91-residue stretch at methionine 1 to serine 91 folds into the CARD domain. The propeptide occupies methionine 1 to proline 119. Over residues glycine 88 to serine 104 the composition is skewed to polar residues. The interval glycine 88–glutamate 125 is disordered. Residues histidine 235 and cysteine 284 contribute to the active site. A propeptide spanning residues serine 297–aspartate 322 is cleaved from the precursor.

This sequence belongs to the peptidase C14A family. As to quaternary structure, heterotetramer that consists of two anti-parallel arranged heterodimers, each one formed by a 20 kDa (Caspase-1 subunit p20) and a 10 kDa (Caspase-1 subunit p10) subunit. May be a component of the inflammasome, a protein complex which also includes PYCARD, CARD8 and NLRP2 and whose function would be the activation of pro-inflammatory caspases. Component of the AIM2 PANoptosome complex, a multiprotein complex that drives inflammatory cell death (PANoptosis). Both the p10 and p20 subunits interact with MEFV. Interacts with CARD17P/INCA and CARD18. Interacts with SERPINB1; this interaction regulates CASP1 activity. In terms of assembly, heterotetramer that consists of two anti-parallel arranged heterodimers, each one formed by a 20 kDa (Caspase-1 subunit p20) and a 10 kDa (Caspase-1 subunit p10) subunit. The two subunits are derived from the precursor sequence by an autocatalytic mechanism. In terms of processing, ubiquitinated via 'Lys-11'-linked polyubiquitination. Deubiquitinated by USP8.

The protein resides in the cytoplasm. The protein localises to the cell membrane. The catalysed reaction is Strict requirement for an Asp residue at position P1 and has a preferred cleavage sequence of Tyr-Val-Ala-Asp-|-.. Its function is as follows. Thiol protease involved in a variety of inflammatory processes by proteolytically cleaving other proteins, such as the precursors of the inflammatory cytokines interleukin-1 beta (IL1B) and interleukin 18 (IL18) as well as the pyroptosis inducer Gasdermin-D (GSDMD), into active mature peptides. Plays a key role in cell immunity as an inflammatory response initiator: once activated through formation of an inflammasome complex, it initiates a pro-inflammatory response through the cleavage of the two inflammatory cytokines IL1B and IL18, releasing the mature cytokines which are involved in a variety of inflammatory processes. Cleaves a tetrapeptide after an Asp residue at position P1. Also initiates pyroptosis, a programmed lytic cell death pathway, through cleavage of GSDMD. In contrast to cleavage of interleukin IL1B, recognition and cleavage of GSDMD is not strictly dependent on the consensus cleavage site but depends on an exosite interface on CASP1 that recognizes and binds the Gasdermin-D, C-terminal (GSDMD-CT) part. Cleaves and activates CASP7 in response to bacterial infection, promoting plasma membrane repair. Upon inflammasome activation, during DNA virus infection but not RNA virus challenge, controls antiviral immunity through the cleavage of CGAS, rendering it inactive. In apoptotic cells, cleaves SPHK2 which is released from cells and remains enzymatically active extracellularly. The polypeptide is Caspase-1 (CASP1) (Felis catus (Cat)).